The sequence spans 59 residues: Potassium channel toxin alpha-KTx 15.5 (59 aa).

Residues 1-22 form the signal peptide; the sequence is MKFSSIILLTLLICSMSIFGNC. Gln-23 bears the Pyrrolidone carboxylic acid mark. Disulfide bonds link Cys-30–Cys-50, Cys-35–Cys-55, and Cys-39–Cys-57.

The protein belongs to the short scorpion toxin superfamily. Potassium channel inhibitor family. Alpha-KTx 15 subfamily. In terms of tissue distribution, expressed by the venom gland.

It is found in the secreted. Functionally, blocker of A-type voltage-gated potassium channels of cerebellar granular cells. May also inhibit Kv4/KCND when coexpressed with DPP6 or DPP10. The occlusion of the outer entry of the K(+) conducting pore is partially reversible and affects both open and closed channels. It shares the same target in rat brain than BmTX3 (AC Q8I0L5) and AmmTX3 (AC P60208). This Androctonus australis (Sahara scorpion) protein is Potassium channel toxin alpha-KTx 15.5.